The sequence spans 501 residues: Cytochrome P450 71B25 (501 aa).

Residues 1–21 form a helical membrane-spanning segment; that stretch reads MAILQSFLLLLSLPFLFTLIY. Heme is bound at residue Cys445.

Belongs to the cytochrome P450 family. Heme is required as a cofactor.

The protein localises to the membrane. In Arabidopsis thaliana (Mouse-ear cress), this protein is Cytochrome P450 71B25 (CYP71B25).